A 453-amino-acid polypeptide reads, in one-letter code: AP-4 complex subunit mu-1 (453 aa).

The region spanning 184 to 452 (KNEVFLDVVE…LSHSNAYVIR (269 aa)) is the MHD domain. Residues 383-403 (PGLQGPPSRGPSPSAPPLGLG) form a disordered region.

It belongs to the adaptor complexes medium subunit family. In terms of assembly, adaptor protein complex 4 (AP-4) is a heterotetramer composed of two large adaptins (epsilon-type subunit AP4E1 and beta-type subunit AP4B1), a medium adaptin (mu-type subunit AP4M1) and a small adaptin (sigma-type AP4S1). Interacts with tyrosine-based sorting signals on the cytoplasmic tail of cargo proteins such as APP, ATG9A, LAMP2 and NAGPA. Interacts with the C-terminal domain of GRID2. Interacts with GRIA1 and GRIA2; the interaction is indirect via CACNG3. Interacts with CACNG3; CACNG3 associates GRIA1 and GRIA2 with the adaptor protein complex 4 (AP-4) to target them to the somatodendritic compartment of neurons. Interacts with HOOK1 and HOOK2; the interactions are direct, mediate the interaction between FTS-Hook-FHIP (FHF) complex and AP-4 and the perinuclear distribution of AP-4. In terms of tissue distribution, high levels in the olfactory bulb, the cerebral cortex, the granule and Purkinje cell layers of the cerebellar cortex and the CA3 region of the hippocampus. Low levels found in molecular layer of cerebellum.

It is found in the golgi apparatus. The protein localises to the trans-Golgi network membrane. It localises to the early endosome. Functionally, component of the adaptor protein complex 4 (AP-4). Adaptor protein complexes are vesicle coat components involved both in vesicle formation and cargo selection. They control the vesicular transport of proteins in different trafficking pathways. AP-4 forms a non clathrin-associated coat on vesicles departing the trans-Golgi network (TGN) and may be involved in the targeting of proteins from the trans-Golgi network (TGN) to the endosomal-lysosomal system. It is also involved in protein sorting to the basolateral membrane in epithelial cells and the proper asymmetric localization of somatodendritic proteins in neurons. Within AP-4, the mu-type subunit AP4M1 is directly involved in the recognition and binding of tyrosine-based sorting signals found in the cytoplasmic part of cargos. The adaptor protein complex 4 (AP-4) may also recognize other types of sorting signal. The protein is AP-4 complex subunit mu-1 of Rattus norvegicus (Rat).